The primary structure comprises 270 residues: Phosphatidylinositol transfer protein alpha isoform (270 aa).

A 1,2-diacyl-sn-glycero-3-phospho-(1D-myo-inositol) contacts are provided by T58, K60, E85, N89, T96, and K194. K215 carries the N6-acetyllysine modification. The span at 250 to 263 shows a compositional bias: basic and acidic residues; the sequence is TKRQLDEMRQKDPV. The disordered stretch occupies residues 250 to 270; that stretch reads TKRQLDEMRQKDPVKGMTADD.

Belongs to the PtdIns transfer protein family. PI transfer class I subfamily.

The protein localises to the cytoplasm. The protein resides in the nucleus. The catalysed reaction is a 1,2-diacyl-sn-glycero-3-phosphocholine(in) = a 1,2-diacyl-sn-glycero-3-phosphocholine(out). The enzyme catalyses a 1,2-diacyl-sn-glycero-3-phospho-(1D-myo-inositol)(in) = a 1,2-diacyl-sn-glycero-3-phospho-(1D-myo-inositol)(out). With respect to regulation, phosphatidylinositol transfer activity is inhibited by N-ethylmaleimide. Its function is as follows. Catalyzes the transfer of phosphatidylinositol (PI) and phosphatidylcholine (PC) between membranes. Shows a preference for PI and PC containing shorter saturated or monosaturated acyl chains at the sn-1 and sn-2 positions. Preference order for PC is C16:1 &gt; C16:0 &gt; C18:1 &gt; C18:0 &gt; C20:4 and for PI is C16:1 &gt; C16:0 &gt; C18:1 &gt; C18:0 &gt; C20:4 &gt; C20:3. This is Phosphatidylinositol transfer protein alpha isoform (PITPNA) from Homo sapiens (Human).